Here is a 111-residue protein sequence, read N- to C-terminus: Large ribosomal subunit protein uL22 (111 aa).

Belongs to the universal ribosomal protein uL22 family. In terms of assembly, part of the 50S ribosomal subunit.

In terms of biological role, this protein binds specifically to 23S rRNA; its binding is stimulated by other ribosomal proteins, e.g. L4, L17, and L20. It is important during the early stages of 50S assembly. It makes multiple contacts with different domains of the 23S rRNA in the assembled 50S subunit and ribosome. Functionally, the globular domain of the protein is located near the polypeptide exit tunnel on the outside of the subunit, while an extended beta-hairpin is found that lines the wall of the exit tunnel in the center of the 70S ribosome. This is Large ribosomal subunit protein uL22 from Thermoanaerobacter pseudethanolicus (strain ATCC 33223 / 39E) (Clostridium thermohydrosulfuricum).